We begin with the raw amino-acid sequence, 844 residues long: DNA mismatch repair protein MutS (844 aa).

610 to 617 (GPNMGGKS) serves as a coordination point for ATP.

This sequence belongs to the DNA mismatch repair MutS family.

Functionally, this protein is involved in the repair of mismatches in DNA. It is possible that it carries out the mismatch recognition step. This protein has a weak ATPase activity. The polypeptide is DNA mismatch repair protein MutS (Francisella tularensis subsp. holarctica (strain FTNF002-00 / FTA)).